The chain runs to 321 residues: Epoxyqueuosine reductase (321 aa).

Asp137 serves as the catalytic Proton donor. The region spanning 179–211 is the 4Fe-4S ferredoxin-type domain; sequence EPLNADPPARSLCGRCSACIDACPTHAIREPFV. Residues Cys191, Cys194, Cys197, Cys201, Cys217, Cys245, Cys248, and Cys252 each contribute to the [4Fe-4S] cluster site.

This sequence belongs to the QueG family. Monomer. Requires cob(II)alamin as cofactor. It depends on [4Fe-4S] cluster as a cofactor.

The protein resides in the cytoplasm. It carries out the reaction epoxyqueuosine(34) in tRNA + AH2 = queuosine(34) in tRNA + A + H2O. It functions in the pathway tRNA modification; tRNA-queuosine biosynthesis. Its function is as follows. Catalyzes the conversion of epoxyqueuosine (oQ) to queuosine (Q), which is a hypermodified base found in the wobble positions of tRNA(Asp), tRNA(Asn), tRNA(His) and tRNA(Tyr). In Synechococcus sp. (strain CC9605), this protein is Epoxyqueuosine reductase.